A 309-amino-acid chain; its full sequence is Protein FdhE (309 aa).

This sequence belongs to the FdhE family.

Its subcellular location is the cytoplasm. Necessary for formate dehydrogenase activity. The sequence is that of Protein FdhE from Salmonella paratyphi A (strain ATCC 9150 / SARB42).